A 146-amino-acid chain; its full sequence is Protein PBDC1 homolog (146 aa).

Belongs to the PBDC1 family.

The protein resides in the cytoplasm. This is Protein PBDC1 homolog from Saccharomyces cerevisiae (strain ATCC 204508 / S288c) (Baker's yeast).